The primary structure comprises 579 residues: 2-isopropylmalate synthase (579 aa).

A Pyruvate carboxyltransferase domain is found at 33–308; it reads PRWLSTDLRD…DPGIDFSDIN (276 aa). Residues D42, H247, H249, and N283 each contribute to the Mg(2+) site. Residues 450–579 are regulatory domain; the sequence is SSDLPVPLAS…IVAPLVAAGR (130 aa).

Belongs to the alpha-IPM synthase/homocitrate synthase family. LeuA type 2 subfamily. As to quaternary structure, homodimer. The cofactor is Mg(2+).

It localises to the cytoplasm. It carries out the reaction 3-methyl-2-oxobutanoate + acetyl-CoA + H2O = (2S)-2-isopropylmalate + CoA + H(+). It participates in amino-acid biosynthesis; L-leucine biosynthesis; L-leucine from 3-methyl-2-oxobutanoate: step 1/4. Functionally, catalyzes the condensation of the acetyl group of acetyl-CoA with 3-methyl-2-oxobutanoate (2-ketoisovalerate) to form 3-carboxy-3-hydroxy-4-methylpentanoate (2-isopropylmalate). This is 2-isopropylmalate synthase from Streptosporangium roseum (strain ATCC 12428 / DSM 43021 / JCM 3005 / KCTC 9067 / NCIMB 10171 / NRRL 2505 / NI 9100).